A 227-amino-acid chain; its full sequence is Thiamine-phosphate synthase (227 aa).

4-amino-2-methyl-5-(diphosphooxymethyl)pyrimidine contacts are provided by residues 46–50 (QLRDK) and N87. 2 residues coordinate Mg(2+): D88 and D107. Residue S126 participates in 4-amino-2-methyl-5-(diphosphooxymethyl)pyrimidine binding. 152–154 (TPT) is a binding site for 2-[(2R,5Z)-2-carboxy-4-methylthiazol-5(2H)-ylidene]ethyl phosphate. K155 lines the 4-amino-2-methyl-5-(diphosphooxymethyl)pyrimidine pocket. G183 provides a ligand contact to 2-[(2R,5Z)-2-carboxy-4-methylthiazol-5(2H)-ylidene]ethyl phosphate.

Belongs to the thiamine-phosphate synthase family. Mg(2+) serves as cofactor.

The enzyme catalyses 2-[(2R,5Z)-2-carboxy-4-methylthiazol-5(2H)-ylidene]ethyl phosphate + 4-amino-2-methyl-5-(diphosphooxymethyl)pyrimidine + 2 H(+) = thiamine phosphate + CO2 + diphosphate. It catalyses the reaction 2-(2-carboxy-4-methylthiazol-5-yl)ethyl phosphate + 4-amino-2-methyl-5-(diphosphooxymethyl)pyrimidine + 2 H(+) = thiamine phosphate + CO2 + diphosphate. The catalysed reaction is 4-methyl-5-(2-phosphooxyethyl)-thiazole + 4-amino-2-methyl-5-(diphosphooxymethyl)pyrimidine + H(+) = thiamine phosphate + diphosphate. It participates in cofactor biosynthesis; thiamine diphosphate biosynthesis; thiamine phosphate from 4-amino-2-methyl-5-diphosphomethylpyrimidine and 4-methyl-5-(2-phosphoethyl)-thiazole: step 1/1. Condenses 4-methyl-5-(beta-hydroxyethyl)thiazole monophosphate (THZ-P) and 2-methyl-4-amino-5-hydroxymethyl pyrimidine pyrophosphate (HMP-PP) to form thiamine monophosphate (TMP). This is Thiamine-phosphate synthase from Mycolicibacterium smegmatis (strain ATCC 700084 / mc(2)155) (Mycobacterium smegmatis).